Reading from the N-terminus, the 142-residue chain is Hemoglobin subunit alpha-4 (142 aa).

Position 1 is an N-acetylserine (S1). A Globin domain is found at 1–142 (SLSAKDKANV…LALALAEKYR (142 aa)). H59 is a binding site for O2. H88 contributes to the heme b binding site.

This sequence belongs to the globin family. Heterotetramer of two alpha chains and two beta chains. As to expression, red blood cells.

In terms of biological role, involved in oxygen transport from gills to the various peripheral tissues. This Oncorhynchus mykiss (Rainbow trout) protein is Hemoglobin subunit alpha-4 (hba4).